Reading from the N-terminus, the 420-residue chain is UDP-N-acetylmuramoylalanine--D-glutamate ligase (420 aa).

109–115 contacts ATP; it reads GSVGKST.

The protein belongs to the MurCDEF family.

Its subcellular location is the cytoplasm. The enzyme catalyses UDP-N-acetyl-alpha-D-muramoyl-L-alanine + D-glutamate + ATP = UDP-N-acetyl-alpha-D-muramoyl-L-alanyl-D-glutamate + ADP + phosphate + H(+). It participates in cell wall biogenesis; peptidoglycan biosynthesis. Its function is as follows. Cell wall formation. Catalyzes the addition of glutamate to the nucleotide precursor UDP-N-acetylmuramoyl-L-alanine (UMA). The sequence is that of UDP-N-acetylmuramoylalanine--D-glutamate ligase from Fervidobacterium nodosum (strain ATCC 35602 / DSM 5306 / Rt17-B1).